Consider the following 49-residue polypeptide: Osteocalcin (49 aa).

The 47-residue stretch at 1 to 47 (YLDSGLGAPVPYPDPLEPKREVCELNPNCDELADHIGFQEAYQRFYG) folds into the Gla domain. Glu-17, Glu-21, Glu-24, and Asp-30 together coordinate Ca(2+). 3 positions are modified to 4-carboxyglutamate: Glu-17, Glu-21, and Glu-24. Cys-23 and Cys-29 are oxidised to a cystine.

It belongs to the osteocalcin/matrix Gla protein family. Gamma-carboxyglutamate residues are formed by vitamin K dependent carboxylation by GGCX. These residues are essential for the binding of calcium. Decarboxylation promotes the hormone activity.

Its subcellular location is the secreted. In terms of biological role, the carboxylated form is one of the main organic components of the bone matrix, which constitutes 1-2% of the total bone protein. It acts as a negative regulator of bone formation and is required to limit bone formation without impairing bone resorption or mineralization. The carboxylated form binds strongly to apatite and calcium. The uncarboxylated form acts as a hormone secreted by osteoblasts, which regulates different cellular processes, such as energy metabolism, male fertility and brain development. Regulates of energy metabolism by acting as a hormone favoring pancreatic beta-cell proliferation, insulin secretion and sensitivity and energy expenditure. Uncarboxylated osteocalcin hormone also promotes testosterone production in the testes: acts as a ligand for G protein-coupled receptor GPRC6A at the surface of Leydig cells, initiating a signaling response that promotes the expression of enzymes required for testosterone synthesis in a CREB-dependent manner. Also acts as a regulator of brain development: osteocalcin hormone crosses the blood-brain barrier and acts as a ligand for GPR158 on neurons, initiating a signaling response that prevents neuronal apoptosis in the hippocampus, favors the synthesis of all monoamine neurotransmitters and inhibits that of gamma-aminobutyric acid (GABA). Osteocalcin also crosses the placenta during pregnancy and maternal osteocalcin is required for fetal brain development. The sequence is that of Osteocalcin (BGLAP) from Canis lupus familiaris (Dog).